The chain runs to 355 residues: Ubiquinone biosynthesis protein COQ4 homolog, mitochondrial (355 aa).

4 residues coordinate Zn(2+): H134, D135, H138, and E150.

It belongs to the COQ4 family. As to quaternary structure, component of a multi-subunit COQ enzyme complex. Zn(2+) serves as cofactor.

Its subcellular location is the mitochondrion inner membrane. The catalysed reaction is a 4-hydroxy-3-methoxy-5-(all-trans-polyprenyl)benzoate + H(+) = a 2-methoxy-6-(all-trans-polyprenyl)phenol + CO2. The protein operates within cofactor biosynthesis; ubiquinone biosynthesis. Lyase that catalyzes the C1-decarboxylation of 4-hydroxy-3-methoxy-5-(all-trans-polyprenyl)benzoic acid into 2-methoxy-6-(all-trans-polyprenyl)phenol during ubiquinone biosynthesis. This is Ubiquinone biosynthesis protein COQ4 homolog, mitochondrial from Plasmodium vivax (strain Salvador I).